A 441-amino-acid chain; its full sequence is Ribosomal protein uS12 methylthiotransferase RimO (441 aa).

The region spanning 8-118 (PKIGFVSLGC…VLQHVHHYVP (111 aa)) is the MTTase N-terminal domain. Residues cysteine 17, cysteine 53, cysteine 82, cysteine 150, cysteine 154, and cysteine 157 each contribute to the [4Fe-4S] cluster site. The Radical SAM core domain maps to 136–373 (LTPRHYAYLK…MQLQQQISAE (238 aa)). In terms of domain architecture, TRAM spans 376–441 (QEKVGREILV…DEYDLWGSRV (66 aa)).

The protein belongs to the methylthiotransferase family. RimO subfamily. Requires [4Fe-4S] cluster as cofactor.

The protein localises to the cytoplasm. It catalyses the reaction L-aspartate(89)-[ribosomal protein uS12]-hydrogen + (sulfur carrier)-SH + AH2 + 2 S-adenosyl-L-methionine = 3-methylsulfanyl-L-aspartate(89)-[ribosomal protein uS12]-hydrogen + (sulfur carrier)-H + 5'-deoxyadenosine + L-methionine + A + S-adenosyl-L-homocysteine + 2 H(+). Functionally, catalyzes the methylthiolation of an aspartic acid residue of ribosomal protein uS12. In Salmonella arizonae (strain ATCC BAA-731 / CDC346-86 / RSK2980), this protein is Ribosomal protein uS12 methylthiotransferase RimO.